The following is an 88-amino-acid chain: M-zodatoxin-Lt1a (88 aa).

The signal sequence occupies residues 1–22 (MKYFVVALALAVALVCIAESTA). A propeptide spanning residues 23–62 (YDVNEELENELDDLSDAAWLAKAAEDLQALDDFEESEESR) is cleaved from the precursor. Residues 59–62 (EESR) carry the Processing quadruplet motif motif.

Cleavage of the propeptide depends on the processing quadruplet motif (XXXR, with at least one of X being E). Expressed by the venom gland.

It is found in the secreted. Has antimicrobial activity against Gram-positive bacteria (A.globiformis VKM Ac-1112 (MIC=0.5 uM), and B.subtilis VKM B-501 (MIC=1.0 uM)), Gram-negative bacteria (E.coli DH5-alpha (MIC=1.0 uM), E.coli MH1 (MIC=0.7 uM), and P.aeruginosa PAO1 (MIC=4.1 uM)), and yeasts (P.pastoris GS115 (MIC=17 uM), and S.cerevisiae Y190 (MIC&gt;33 uM)). Has a moderate hemolytic activity against rabbit erythrocytes. Causes paralysis, but is not lethal when injected into insect (M.domestica) larvae. The polypeptide is M-zodatoxin-Lt1a (Lachesana tarabaevi (Spider)).